A 100-amino-acid polypeptide reads, in one-letter code: Small ribosomal subunit protein uS14c (100 aa).

This sequence belongs to the universal ribosomal protein uS14 family. As to quaternary structure, part of the 30S ribosomal subunit.

Its subcellular location is the plastid. It localises to the chloroplast. Functionally, binds 16S rRNA, required for the assembly of 30S particles. The protein is Small ribosomal subunit protein uS14c of Nephroselmis olivacea (Green alga).